Consider the following 586-residue polypeptide: Transmembrane protease serine 13 (586 aa).

2 disordered regions span residues 1 to 115 and 131 to 157; these read MERD…VTTS and PIRS…LPKF. Residues 1-165 are Cytoplasmic-facing; the sequence is MERDSHGNAS…KFTWREGQKQ (165 aa). The 1-1 repeat unit spans residues 9 to 13; the sequence is ASPAR. The tract at residues 9-93 is 13 X 5 AA repeats of A-S-P-A-[GLQR]; sequence ASPARTPSAG…ASPARASPAL (85 aa). The 2-1; approximate repeat unit spans residues 14-18; sequence TPSAG. The span at 14-52 shows a compositional bias: low complexity; that stretch reads TPSAGASPAQASPAGTPPGRASPAQASPAQASPAGTPPG. The tract at residues 14–68 is 4 X 5 AA repeats of T-P-P-G-R; it reads TPSAGASPAQASPAGTPPGRASPAQASPAQASPAGTPPGRASPAQASPAGTPPGR. Tandem repeats lie at residues 19 to 23, 24 to 28, 29 to 33, 34 to 38, 39 to 43, 44 to 48, 49 to 53, 54 to 58, 59 to 63, and 64 to 68. The 1-9; approximate repeat unit spans residues 69–78; that stretch reads ASPGRASPAQ. 2 stretches are compositionally biased toward low complexity: residues 69–111 and 133–144; these read ASPG…RSAS and RSSPARSAPATR. Repeat copies occupy residues 79–83, 84–88, and 89–93. Residues 166–186 form a helical; Signal-anchor for type II membrane protein membrane-spanning segment; that stretch reads LPLIGCVLLLIALVVSLIILF. Residues 187–586 lie on the Extracellular side of the membrane; it reads QFWQGHTGIR…GGDPGGAPRL (400 aa). The 131-residue stretch at 195 to 325 folds into the SRCR domain; sequence IRYKEQRESC…HCGLRAMTGR (131 aa). Residues 204–226 enclose the LDL-receptor class A domain; sequence CPKHAVRCDGVVDCKLKSDELGC. Disulfide bonds link cysteine 250/cysteine 314, cysteine 263/cysteine 317, and cysteine 351/cysteine 367. 2 N-linked (GlcNAc...) asparagine glycosylation sites follow: asparagine 255 and asparagine 292. Positions 326–559 constitute a Peptidase S1 domain; that stretch reads IVGGALASDS…VLPWIYSKME (234 aa). Histidine 366 serves as the catalytic Charge relay system. N-linked (GlcNAc...) asparagine glycosylation occurs at asparagine 405. Aspartate 414 acts as the Charge relay system in catalysis. Asparagine 445 carries N-linked (GlcNAc...) asparagine glycosylation. Intrachain disulfides connect cysteine 448–cysteine 517, cysteine 480–cysteine 496, and cysteine 507–cysteine 535. Serine 511 serves as the catalytic Charge relay system. Polar residues predominate over residues 565-574; that stretch reads QDTAPSRLGT. A disordered region spans residues 565–586; it reads QDTAPSRLGTSSGGDPGGAPRL. Over residues 575 to 586 the composition is skewed to gly residues; it reads SSGGDPGGAPRL.

The protein belongs to the peptidase S1 family. As to quaternary structure, interacts with SPINT1/HAI-1; the interaction promotes the phosphorylation and cell membrane localization of TMPRSS13. Interacts with SPINT2/HAI-2; the interaction promotes the phosphorylation and cell membrane localization of TMPRSS13. In terms of processing, the inactive zymogen is post-translationally modified and then trafficked to the cell surface, whereby it undergoes autocatalytic cleavage resulting in an activated form that is released extracellularly. Phosphorylation is required for localization at the cell surface. Phosphorylation increases following inhibition of protease activity by SPINT2/HAI-2. Post-translationally, N-glycosylation of Asn-405 and Asn-445 is required for exit from the endoplasmic reticulum and trafficking to the cell surface. Also required for autocleavage of the zymogen, activation and secretion of the mature protein. Expressed in placenta. In terms of tissue distribution, predominantly expressed in lung, placenta, pancreas, and prostate. As to expression, expressed in lung, placenta, pancreas, and prostate. Weakly expressed in testis and peripheral blood lymphocytes.

The protein localises to the cell membrane. It localises to the secreted. The protein resides in the cytoplasm. With respect to regulation, cleavage of HGF is inhibited by SPINT1/HAI-1 via the BPTI/Kunitz inhibitor 1 domain. Functionally, serine protease. Cleaves the proform of PRSS8/prostasin to form the active protein. Cleaves the proform of HGF to form the active protein which promotes MAPK signaling. Promotes the formation of the stratum corneum and subsequently the epidermal barrier in embryos. The chain is Transmembrane protease serine 13 (TMPRSS13) from Homo sapiens (Human).